We begin with the raw amino-acid sequence, 272 residues long: 4-diphosphocytidyl-2-C-methyl-D-erythritol kinase (272 aa).

Residue lysine 14 is part of the active site. 92–102 (PMGGGLGGGSS) is an ATP binding site. Residue aspartate 132 is part of the active site.

This sequence belongs to the GHMP kinase family. IspE subfamily.

The enzyme catalyses 4-CDP-2-C-methyl-D-erythritol + ATP = 4-CDP-2-C-methyl-D-erythritol 2-phosphate + ADP + H(+). The protein operates within isoprenoid biosynthesis; isopentenyl diphosphate biosynthesis via DXP pathway; isopentenyl diphosphate from 1-deoxy-D-xylulose 5-phosphate: step 3/6. Its function is as follows. Catalyzes the phosphorylation of the position 2 hydroxy group of 4-diphosphocytidyl-2C-methyl-D-erythritol. This is 4-diphosphocytidyl-2-C-methyl-D-erythritol kinase from Fervidobacterium nodosum (strain ATCC 35602 / DSM 5306 / Rt17-B1).